The sequence spans 273 residues: Pantothenate synthetase (273 aa).

ATP is bound at residue 27-34; the sequence is MGALHDGH. His-34 (proton donor) is an active-site residue. A (R)-pantoate-binding site is contributed by Gln-58. Gln-58 serves as a coordination point for beta-alanine. Position 144 to 147 (144 to 147) interacts with ATP; the sequence is GKKD. Gln-150 serves as a coordination point for (R)-pantoate. ATP contacts are provided by residues Val-173 and 181–184; that span reads LSSR.

This sequence belongs to the pantothenate synthetase family. In terms of assembly, homodimer.

The protein resides in the cytoplasm. The enzyme catalyses (R)-pantoate + beta-alanine + ATP = (R)-pantothenate + AMP + diphosphate + H(+). The protein operates within cofactor biosynthesis; (R)-pantothenate biosynthesis; (R)-pantothenate from (R)-pantoate and beta-alanine: step 1/1. Functionally, catalyzes the condensation of pantoate with beta-alanine in an ATP-dependent reaction via a pantoyl-adenylate intermediate. The polypeptide is Pantothenate synthetase (Campylobacter curvus (strain 525.92)).